Reading from the N-terminus, the 408-residue chain is Serine/threonine transporter SstT (408 aa).

9 consecutive transmembrane segments (helical) span residues 11 to 31, 43 to 63, 82 to 102, 141 to 161, 192 to 212, 216 to 236, 290 to 310, 316 to 336, and 363 to 383; these read LANGSLVLQILVGIIAGVALA, FLGSLFVGALKAIAPILVFIL, IVVLYLLGTFAAALTAVILSM, ALMTGNYIGILAWGVGLGLAL, IGIFGLVAATFAETGFAAIAG, LLAVLLGAMAFIALIINPLIV, IPLGATINMGGAAITITVLTL, LGIQVDLLTALLLSVVAAISA, and VAMQVVAVGFIIGVIQDAAET.

It belongs to the dicarboxylate/amino acid:cation symporter (DAACS) (TC 2.A.23) family.

It is found in the cell inner membrane. The enzyme catalyses L-serine(in) + Na(+)(in) = L-serine(out) + Na(+)(out). It carries out the reaction L-threonine(in) + Na(+)(in) = L-threonine(out) + Na(+)(out). Functionally, involved in the import of serine and threonine into the cell, with the concomitant import of sodium (symport system). In Shewanella oneidensis (strain ATCC 700550 / JCM 31522 / CIP 106686 / LMG 19005 / NCIMB 14063 / MR-1), this protein is Serine/threonine transporter SstT.